Here is a 118-residue protein sequence, read N- to C-terminus: ATP-dependent Clp protease adapter protein ClpS (118 aa).

The segment at 1–24 (MNGSSNSGSPGGGQTGDDDGTGFD) is disordered.

It belongs to the ClpS family. As to quaternary structure, binds to the N-terminal domain of the chaperone ClpA.

In terms of biological role, involved in the modulation of the specificity of the ClpAP-mediated ATP-dependent protein degradation. This chain is ATP-dependent Clp protease adapter protein ClpS, found in Hyphomonas neptunium (strain ATCC 15444).